A 50-amino-acid chain; its full sequence is Small ribosomal subunit protein eS31 (50 aa).

Cys-22, Cys-25, Cys-40, and Cys-43 together coordinate Zn(2+). The C4-type zinc-finger motif lies at Cys-22 to Cys-43.

It belongs to the eukaryotic ribosomal protein eS31 family. As to quaternary structure, part of the 30S ribosomal subunit. Zn(2+) serves as cofactor.

The polypeptide is Small ribosomal subunit protein eS31 (Pyrococcus horikoshii (strain ATCC 700860 / DSM 12428 / JCM 9974 / NBRC 100139 / OT-3)).